The sequence spans 281 residues: ATP phosphoribosyltransferase (281 aa).

This sequence belongs to the ATP phosphoribosyltransferase family. Long subfamily. Mg(2+) serves as cofactor.

It is found in the cytoplasm. The catalysed reaction is 1-(5-phospho-beta-D-ribosyl)-ATP + diphosphate = 5-phospho-alpha-D-ribose 1-diphosphate + ATP. It functions in the pathway amino-acid biosynthesis; L-histidine biosynthesis; L-histidine from 5-phospho-alpha-D-ribose 1-diphosphate: step 1/9. With respect to regulation, feedback inhibited by histidine. In terms of biological role, catalyzes the condensation of ATP and 5-phosphoribose 1-diphosphate to form N'-(5'-phosphoribosyl)-ATP (PR-ATP). Has a crucial role in the pathway because the rate of histidine biosynthesis seems to be controlled primarily by regulation of HisG enzymatic activity. The sequence is that of ATP phosphoribosyltransferase (hisG) from Archaeoglobus fulgidus (strain ATCC 49558 / DSM 4304 / JCM 9628 / NBRC 100126 / VC-16).